An 89-amino-acid polypeptide reads, in one-letter code: Luqin-like RYamide peptides lury-1 (89 aa).

The first 19 residues, 1 to 19, serve as a signal peptide directing secretion; it reads MLTRVPVLILAVIVMLALC. The propeptide occupies 20–26; it reads QEPEKPE. Residues Tyr-35 and Tyr-43 each carry the tyrosine amide modification. A propeptide spanning residues 47–89 is cleaved from the precursor; that stretch reads SGNLMESSQNSLTEESSDVVCQLIDGKYICLPVDAVRFRPFFL.

Expressed in the M1 and M2 pharyngeal neurons from where the LURY-1-1 and LURY-1-2 peptides are secreted.

The protein resides in the secreted. In terms of biological role, acts as a ligand for the npr-22 receptor and controls food-related processes including feeding, lifespan, egg-laying and roaming behavior. Secreted in the presence of food, leading to reduced feeding and roaming behavior and increased egg laying and lifespan. Activity may be latent under normal conditions but induced under conditions that cause hyperactivation of the pharynx such as abrupt refeeding after starvation. The protein is Luqin-like RYamide peptides lury-1 of Caenorhabditis elegans.